The chain runs to 205 residues: Dephospho-CoA kinase (205 aa).

One can recognise a DPCK domain in the interval 7-205 (IIGVTGRIAS…QGIINYERFE (199 aa)). 15 to 20 (ASGKDT) is a binding site for ATP.

The protein belongs to the CoaE family.

Its subcellular location is the cytoplasm. It catalyses the reaction 3'-dephospho-CoA + ATP = ADP + CoA + H(+). It participates in cofactor biosynthesis; coenzyme A biosynthesis; CoA from (R)-pantothenate: step 5/5. Functionally, catalyzes the phosphorylation of the 3'-hydroxyl group of dephosphocoenzyme A to form coenzyme A. The protein is Dephospho-CoA kinase of Borreliella burgdorferi (strain ATCC 35210 / DSM 4680 / CIP 102532 / B31) (Borrelia burgdorferi).